We begin with the raw amino-acid sequence, 184 residues long: C-phycoerythrin beta chain (184 aa).

2 residues coordinate (2R,3E)-phycoerythrobilin: Cys48 and Cys59. At Asn70 the chain carries N4-methylasparagine. The (2R,3E)-phycoerythrobilin site is built by Cys80 and Cys165.

The protein belongs to the phycobiliprotein family. Heterodimer of an alpha and a beta chain. Contains three covalently linked bilin chromophores.

The protein resides in the cellular thylakoid membrane. Functionally, light-harvesting photosynthetic bile pigment-protein from the phycobiliprotein complex. This Microchaete diplosiphon (Fremyella diplosiphon) protein is C-phycoerythrin beta chain (cpeB).